A 131-amino-acid chain; its full sequence is Peptide methionine sulfoxide reductase MsrB (131 aa).

Residues 8–130 (LEEWRAMLDP…NSVCLDLVPR (123 aa)) form the MsrB domain. Residues cysteine 47, cysteine 50, cysteine 96, and cysteine 99 each contribute to the Zn(2+) site. The active-site Nucleophile is cysteine 119.

This sequence belongs to the MsrB Met sulfoxide reductase family. It depends on Zn(2+) as a cofactor.

The catalysed reaction is L-methionyl-[protein] + [thioredoxin]-disulfide + H2O = L-methionyl-(R)-S-oxide-[protein] + [thioredoxin]-dithiol. In Pseudomonas fluorescens (strain Pf0-1), this protein is Peptide methionine sulfoxide reductase MsrB.